Consider the following 387-residue polypeptide: Protein FAM153B (387 aa).

Disordered regions lie at residues 233–256 and 327–374; these read SYNGEEEDPEEVKTSLGVPQRGDL and TITG…KKSR. The segment covering 336–345 has biased composition (low complexity); sequence SASPSSAPAE. The segment covering 347–359 has biased composition (basic and acidic residues); the sequence is ATEKTKVEEEVKT. Residues 360–374 show a composition bias toward basic residues; it reads RKPKKKTRKPSKKSR.

Belongs to the FAM153 family.

This is Protein FAM153B (FAM153B) from Homo sapiens (Human).